We begin with the raw amino-acid sequence, 477 residues long: Trigger factor (477 aa).

The 86-residue stretch at 169–254 folds into the PPIase FKBP-type domain; the sequence is EDRVTIDYLG…VKEVAKPNEL (86 aa). The segment at 435–477 is disordered; that stretch reads VSKEELTAEDEDAASEAKPAKKAAAKKKAAPKKKAEEGKSEEA. Basic residues predominate over residues 454–466; it reads AKKAAAKKKAAPK. The segment covering 467-477 has biased composition (basic and acidic residues); that stretch reads KKAEEGKSEEA.

The protein belongs to the FKBP-type PPIase family. Tig subfamily.

It is found in the cytoplasm. The enzyme catalyses [protein]-peptidylproline (omega=180) = [protein]-peptidylproline (omega=0). Its function is as follows. Involved in protein export. Acts as a chaperone by maintaining the newly synthesized protein in an open conformation. Functions as a peptidyl-prolyl cis-trans isomerase. This is Trigger factor from Brucella suis biovar 1 (strain 1330).